We begin with the raw amino-acid sequence, 182 residues long: CDP-diacylglycerol--glycerol-3-phosphate 3-phosphatidyltransferase (182 aa).

Residues 1 to 12 (MQLNIPTWLTLF) lie on the Cytoplasmic side of the membrane. Residues 13–37 (RVVMIPFFVLAFYLPFKWAPLCCAL) traverse the membrane as a helical segment. The Periplasmic segment spans residues 38-60 (IFVLAAVTDWFDGFLARRWKQTT). Residues 61–81 (RFGAFLDPVADKVMVAMALVL) traverse the membrane as a helical segment. Topologically, residues 82-86 (VAEHF) are cytoplasmic. The helical transmembrane segment at 87–107 (HSWWITLPAATMIAREIIISA) threads the bilayer. Over 108 to 145 (LREWMAEIGKRSSVAVSWIGKVKTTAQMLALVTLLWRP) the chain is Periplasmic. A helical transmembrane segment spans residues 146 to 168 (DDIVSGIGIAALYVAAVLTFWSM). Over 169-181 (FQYLYAARHDLFE) the chain is Cytoplasmic.

The protein belongs to the CDP-alcohol phosphatidyltransferase class-I family.

Its subcellular location is the cell inner membrane. It carries out the reaction a CDP-1,2-diacyl-sn-glycerol + sn-glycerol 3-phosphate = a 1,2-diacyl-sn-glycero-3-phospho-(1'-sn-glycero-3'-phosphate) + CMP + H(+). It functions in the pathway phospholipid metabolism; phosphatidylglycerol biosynthesis; phosphatidylglycerol from CDP-diacylglycerol: step 1/2. Its function is as follows. Catalyzes the conversion of cytidine diphosphate diacylglycerol (CDP-DG) and glycerol 3-phosphate into phosphatidylglycerol. Essential for the synthesis of anionic phospholipids, thereby playing a role in balancing the ratio of zwitterionic and anionic phospholipids, which is thought to be important for normal membrane function. This is CDP-diacylglycerol--glycerol-3-phosphate 3-phosphatidyltransferase from Sodalis glossinidius (strain morsitans).